Reading from the N-terminus, the 306-residue chain is Cell division protein ZipA (306 aa).

Topologically, residues 1-6 (MENLQL) are periplasmic. Residues 7–27 (VLLLIGAIAIIAVLVHGFWSI) traverse the membrane as a helical segment. Topologically, residues 28 to 306 (RKQQPKGYKQ…NYIQRIRAQA (279 aa)) are cytoplasmic.

This sequence belongs to the ZipA family. In terms of assembly, interacts with FtsZ via their C-terminal domains.

The protein resides in the cell inner membrane. In terms of biological role, essential cell division protein that stabilizes the FtsZ protofilaments by cross-linking them and that serves as a cytoplasmic membrane anchor for the Z ring. Also required for the recruitment to the septal ring of downstream cell division proteins. The chain is Cell division protein ZipA from Shewanella halifaxensis (strain HAW-EB4).